The following is a 599-amino-acid chain: NADH-quinone oxidoreductase subunit C/D (599 aa).

An NADH dehydrogenase I subunit C region spans residues 1–190 (MMIDQIAQES…DPFELTRQKE (190 aa)). The interval 214–599 (DFMFLNLGPN…IDFVMSDVDR (386 aa)) is NADH dehydrogenase I subunit D.

This sequence in the N-terminal section; belongs to the complex I 30 kDa subunit family. It in the C-terminal section; belongs to the complex I 49 kDa subunit family. NDH-1 is composed of 13 different subunits. Subunits NuoB, CD, E, F, and G constitute the peripheral sector of the complex.

The protein localises to the cell inner membrane. It catalyses the reaction a quinone + NADH + 5 H(+)(in) = a quinol + NAD(+) + 4 H(+)(out). Its function is as follows. NDH-1 shuttles electrons from NADH, via FMN and iron-sulfur (Fe-S) centers, to quinones in the respiratory chain. The immediate electron acceptor for the enzyme in this species is believed to be ubiquinone. Couples the redox reaction to proton translocation (for every two electrons transferred, four hydrogen ions are translocated across the cytoplasmic membrane), and thus conserves the redox energy in a proton gradient. This Photorhabdus laumondii subsp. laumondii (strain DSM 15139 / CIP 105565 / TT01) (Photorhabdus luminescens subsp. laumondii) protein is NADH-quinone oxidoreductase subunit C/D.